Here is a 647-residue protein sequence, read N- to C-terminus: Macrolide export ATP-binding/permease protein MacB (647 aa).

In terms of domain architecture, ABC transporter spans 6–244 (LEISGCYRTF…VDTAVTKINN (239 aa)). An ATP-binding site is contributed by 42–49 (GASGSGKS). Transmembrane regions (helical) follow at residues 273-293 (FLTM…VALG), 522-542 (LLIS…VMNI), 577-597 (LVCL…GVVF), and 612-632 (SIVA…FLPA).

This sequence belongs to the ABC transporter superfamily. Macrolide exporter (TC 3.A.1.122) family. As to quaternary structure, homodimer. Part of the tripartite efflux system MacAB-TolC, which is composed of an inner membrane transporter, MacB, a periplasmic membrane fusion protein, MacA, and an outer membrane component, TolC. The complex forms a large protein conduit and can translocate molecules across both the inner and outer membranes. Interacts with MacA.

Its subcellular location is the cell inner membrane. In terms of biological role, part of the tripartite efflux system MacAB-TolC. MacB is a non-canonical ABC transporter that contains transmembrane domains (TMD), which form a pore in the inner membrane, and an ATP-binding domain (NBD), which is responsible for energy generation. Confers resistance against macrolides. In Shewanella sp. (strain W3-18-1), this protein is Macrolide export ATP-binding/permease protein MacB.